A 1364-amino-acid chain; its full sequence is Trifunctional purine biosynthetic protein adenosine-3 (1364 aa).

The ATP-grasp domain maps to K114 to S321. I140–S202 serves as a coordination point for ATP. Mn(2+) contacts are provided by E291 and N293. The interval A435–P1154 is AIRS. A GART region spans residues R1155–Q1364. G1166 to N1168 is a binding site for N(1)-(5-phospho-beta-D-ribosyl)glycinamide. (6R)-10-formyltetrahydrofolate-binding positions include R1221, M1246–L1249, and N1263. Catalysis depends on H1265, which acts as the Proton donor. D1297–D1301 contributes to the (6R)-10-formyltetrahydrofolate binding site. A N(1)-(5-phospho-beta-D-ribosyl)glycinamide-binding site is contributed by H1327–E1330.

This sequence in the N-terminal section; belongs to the GARS family. It in the central section; belongs to the AIR synthase family. The protein in the C-terminal section; belongs to the GART family.

It carries out the reaction 5-phospho-beta-D-ribosylamine + glycine + ATP = N(1)-(5-phospho-beta-D-ribosyl)glycinamide + ADP + phosphate + H(+). The enzyme catalyses 2-formamido-N(1)-(5-O-phospho-beta-D-ribosyl)acetamidine + ATP = 5-amino-1-(5-phospho-beta-D-ribosyl)imidazole + ADP + phosphate + H(+). It catalyses the reaction N(1)-(5-phospho-beta-D-ribosyl)glycinamide + (6R)-10-formyltetrahydrofolate = N(2)-formyl-N(1)-(5-phospho-beta-D-ribosyl)glycinamide + (6S)-5,6,7,8-tetrahydrofolate + H(+). It participates in purine metabolism; IMP biosynthesis via de novo pathway; 5-amino-1-(5-phospho-D-ribosyl)imidazole from N(2)-formyl-N(1)-(5-phospho-D-ribosyl)glycinamide: step 2/2. It functions in the pathway purine metabolism; IMP biosynthesis via de novo pathway; N(1)-(5-phospho-D-ribosyl)glycinamide from 5-phospho-alpha-D-ribose 1-diphosphate: step 2/2. The protein operates within purine metabolism; IMP biosynthesis via de novo pathway; N(2)-formyl-N(1)-(5-phospho-D-ribosyl)glycinamide from N(1)-(5-phospho-D-ribosyl)glycinamide (10-formyl THF route): step 1/1. Functionally, trifunctional enzyme required for de novo purine biosynthesis. In Drosophila pseudoobscura pseudoobscura (Fruit fly), this protein is Trifunctional purine biosynthetic protein adenosine-3 (ade3).